Reading from the N-terminus, the 92-residue chain is Small ribosomal subunit protein bS20 (92 aa).

Belongs to the bacterial ribosomal protein bS20 family.

Functionally, binds directly to 16S ribosomal RNA. The protein is Small ribosomal subunit protein bS20 of Rickettsia conorii (strain ATCC VR-613 / Malish 7).